The sequence spans 843 residues: Taste receptor type 1 member 2 (843 aa).

An N-terminal signal peptide occupies residues 1–19 (MGPQARTLCLLSLLLHVLP). At 20–570 (KPGKLVENSD…TFLEWHEVPT (551 aa)) the chain is on the extracellular side. N-linked (GlcNAc...) asparagine glycans are attached at residues asparagine 87, asparagine 296, asparagine 316, asparagine 355, asparagine 372, asparagine 432, asparagine 484, asparagine 491, and asparagine 531. A helical transmembrane segment spans residues 571-591 (IVVAILAALGFFSTLAILFIF). Over 592-606 (WRHFQTPMVRSAGGP) the chain is Cytoplasmic. A helical transmembrane segment spans residues 607 to 627 (MCFLMLVPLLLAFGMVPVYVG). Over 628-642 (PPTVFSCFCRQAFFT) the chain is Extracellular. The chain crosses the membrane as a helical span at residues 643–663 (VCFSICLSCITVRSFQIVCVF). Over 664-682 (KMARRLPSAYSFWMRYHGP) the chain is Cytoplasmic. The chain crosses the membrane as a helical span at residues 683–703 (YVFVAFITAIKVALVVGNMLA). Residues 704–731 (TTINPIGRTDPDDPNIMILSCHPNYRNG) lie on the Extracellular side of the membrane. The chain crosses the membrane as a helical span at residues 732–752 (LLFNTSMDLLLSVLGFSFAYM). Residues 753-764 (GKELPTNYNEAK) lie on the Cytoplasmic side of the membrane. Residues 765–785 (FITLSMTFSFTSSISLCTFMS) traverse the membrane as a helical segment. The Extracellular segment spans residues 786–789 (VHDG). A helical membrane pass occupies residues 790 to 810 (VLVTIMDLLVTVLNFLAIGLG). The Cytoplasmic portion of the chain corresponds to 811 to 843 (YFGPKCYMILFYPERNTSAYFNSMIQGYTMRKS).

It belongs to the G-protein coupled receptor 3 family. TAS1R subfamily. As to quaternary structure, forms heterodimers with TAS1R3. In terms of tissue distribution, abundantly expressed in circumvallate and foliate papillae.

It is found in the cell membrane. In terms of biological role, putative taste receptor. TAS1R2/TAS1R3 recognizes diverse natural and synthetic sweeteners. This chain is Taste receptor type 1 member 2 (Tas1r2), found in Rattus norvegicus (Rat).